Reading from the N-terminus, the 245-residue chain is 2,3-bisphosphoglycerate-dependent phosphoglycerate mutase (245 aa).

Substrate is bound by residues 9-16 (RHGESEWN), 22-23 (TG), Arg-61, 88-91 (ERHY), Lys-99, 115-116 (RR), and 181-182 (GN). The active-site Tele-phosphohistidine intermediate is the His-10. The Proton donor/acceptor role is filled by Glu-88.

Belongs to the phosphoglycerate mutase family. BPG-dependent PGAM subfamily.

It catalyses the reaction (2R)-2-phosphoglycerate = (2R)-3-phosphoglycerate. It participates in carbohydrate degradation; glycolysis; pyruvate from D-glyceraldehyde 3-phosphate: step 3/5. Its function is as follows. Catalyzes the interconversion of 2-phosphoglycerate and 3-phosphoglycerate. The sequence is that of 2,3-bisphosphoglycerate-dependent phosphoglycerate mutase from Nocardia farcinica (strain IFM 10152).